Here is a 306-residue protein sequence, read N- to C-terminus: D-alanine--D-alanine ligase B (306 aa).

An ATP-grasp domain is found at 101–303; the sequence is KLLWQGAGLP…FSQLVVRILE (203 aa). 134–189 serves as a coordination point for ATP; sequence ISALGLPLIVKPSREGSSVGMTKVVEENALQGALSLAFQHDDEILIEKWLCGPEFT. Asp257, Glu270, and Asn272 together coordinate Mg(2+).

It belongs to the D-alanine--D-alanine ligase family. In terms of assembly, monomer. It depends on Mg(2+) as a cofactor. Mn(2+) serves as cofactor.

It is found in the cytoplasm. The catalysed reaction is 2 D-alanine + ATP = D-alanyl-D-alanine + ADP + phosphate + H(+). It participates in cell wall biogenesis; peptidoglycan biosynthesis. Its function is as follows. Cell wall formation. The polypeptide is D-alanine--D-alanine ligase B (ddlB) (Salmonella typhimurium (strain LT2 / SGSC1412 / ATCC 700720)).